The chain runs to 557 residues: TBCC domain-containing protein 1 (557 aa).

A C-CAP/cofactor C-like domain is found at 290 to 435 (TTKRAKIACN…LEDHMARTGL (146 aa)).

It belongs to the TBCC family.

Its subcellular location is the cytoplasm. The protein resides in the cytoskeleton. It localises to the microtubule organizing center. It is found in the centrosome. The protein localises to the spindle pole. Plays a role in the regulation of centrosome and Golgi apparatus positioning, with consequences on cell shape and cell migration. This chain is TBCC domain-containing protein 1 (TBCCD1), found in Bos taurus (Bovine).